The primary structure comprises 249 residues: DNA polymerase sliding clamp (249 aa).

This sequence belongs to the PCNA family. Homotrimer. The subunits circularize to form a toroid; DNA passes through its center. Replication factor C (RFC) is required to load the toroid on the DNA.

Sliding clamp subunit that acts as a moving platform for DNA processing. Responsible for tethering the catalytic subunit of DNA polymerase and other proteins to DNA during high-speed replication. This Thermococcus gammatolerans (strain DSM 15229 / JCM 11827 / EJ3) protein is DNA polymerase sliding clamp.